The sequence spans 152 residues: Xanthine-guanine phosphoribosyltransferase (152 aa).

Residues 37 to 38 (RG), Arg69, and 88 to 96 (DDLVDTGGT) each bind 5-phospho-alpha-D-ribose 1-diphosphate. Arg69 contributes to the GMP binding site. Asp89 serves as a coordination point for Mg(2+). Residues Asp92 and Ile135 each contribute to the guanine site. Xanthine contacts are provided by Asp92 and Ile135. GMP is bound by residues 92-96 (DTGGT) and 134-135 (WI).

The protein belongs to the purine/pyrimidine phosphoribosyltransferase family. XGPT subfamily. In terms of assembly, homotetramer. The cofactor is Mg(2+).

It is found in the cell inner membrane. It catalyses the reaction GMP + diphosphate = guanine + 5-phospho-alpha-D-ribose 1-diphosphate. The enzyme catalyses XMP + diphosphate = xanthine + 5-phospho-alpha-D-ribose 1-diphosphate. The catalysed reaction is IMP + diphosphate = hypoxanthine + 5-phospho-alpha-D-ribose 1-diphosphate. Its pathway is purine metabolism; GMP biosynthesis via salvage pathway; GMP from guanine: step 1/1. It participates in purine metabolism; XMP biosynthesis via salvage pathway; XMP from xanthine: step 1/1. In terms of biological role, purine salvage pathway enzyme that catalyzes the transfer of the ribosyl-5-phosphate group from 5-phospho-alpha-D-ribose 1-diphosphate (PRPP) to the N9 position of the 6-oxopurines guanine and xanthine to form the corresponding ribonucleotides GMP (guanosine 5'-monophosphate) and XMP (xanthosine 5'-monophosphate), with the release of PPi. To a lesser extent, also acts on hypoxanthine. This chain is Xanthine-guanine phosphoribosyltransferase, found in Erwinia tasmaniensis (strain DSM 17950 / CFBP 7177 / CIP 109463 / NCPPB 4357 / Et1/99).